We begin with the raw amino-acid sequence, 331 residues long: Ribosomal RNA small subunit methyltransferase H (331 aa).

Residues 48 to 50 (GGH), Asp67, Asp115, and Gln122 each bind S-adenosyl-L-methionine. The interval 297–331 (RGTEKPTEEEISENRRASSAKVRAVEKIRTSRTTA) is disordered. Residues 298-312 (GTEKPTEEEISENRR) are compositionally biased toward basic and acidic residues.

It belongs to the methyltransferase superfamily. RsmH family.

It localises to the cytoplasm. It carries out the reaction cytidine(1402) in 16S rRNA + S-adenosyl-L-methionine = N(4)-methylcytidine(1402) in 16S rRNA + S-adenosyl-L-homocysteine + H(+). Specifically methylates the N4 position of cytidine in position 1402 (C1402) of 16S rRNA. In Micrococcus luteus (strain ATCC 4698 / DSM 20030 / JCM 1464 / CCM 169 / CCUG 5858 / IAM 1056 / NBRC 3333 / NCIMB 9278 / NCTC 2665 / VKM Ac-2230) (Micrococcus lysodeikticus), this protein is Ribosomal RNA small subunit methyltransferase H.